A 343-amino-acid chain; its full sequence is Twinfilin (343 aa).

ADF-H domains follow at residues 11–135 (EQLA…EGYR) and 184–312 (EATV…DELH). A disordered region spans residues 319–343 (RPAFAKPKGPPNRGAKRLTRPTAED).

This sequence belongs to the actin-binding proteins ADF family. Twinfilin subfamily. As to quaternary structure, interacts with G-actin; ADP-actin form.

The protein resides in the cytoplasm. It localises to the cytoskeleton. It is found in the cell cortex. Its function is as follows. Actin-binding protein involved in motile and morphological processes. Inhibits actin polymerization, likely by sequestering G-actin. The polypeptide is Twinfilin (twf) (Drosophila melanogaster (Fruit fly)).